The sequence spans 622 residues: Polypeptide N-acetylgalactosaminyltransferase 6 (622 aa).

Topologically, residues 1–8 (MRLLRRRH) are cytoplasmic. The chain crosses the membrane as a helical; Signal-anchor for type II membrane protein span at residues 9–28 (MAVRLVMVGSAFVLFLFILQ). Over 29-622 (RDVSGREQAT…SDPHQHWLFI (594 aa)) the chain is Lumenal. The N-linked (GlcNAc...) asparagine glycan is linked to N86. The interval 103–135 (WERPPQDPNGPGADGKAFQKKEWTPQETQEKEE) is disordered. The span at 119–135 (AFQKKEWTPQETQEKEE) shows a compositional bias: basic and acidic residues. Residues 176 to 285 (LPATSVIIVF…HGWLEPLLAR (110 aa)) are catalytic subdomain A. D269, H271, and H407 together coordinate Mn(2+). The catalytic subdomain B stretch occupies residues 348–410 (PIKSPTFAGG…PCSVVGHVFR (63 aa)). N476 carries N-linked (GlcNAc...) asparagine glycosylation. Residues 507-622 (DHCLDVGENN…SDPHQHWLFI (116 aa)) form the Ricin B-type lectin domain. A disulfide bridge connects residues C509 and C527. D511, E514, H528, and N533 together coordinate UDP-N-acetyl-alpha-D-galactosamine. Disulfide bonds link C553/C566 and C597/C610.

The protein belongs to the glycosyltransferase 2 family. GalNAc-T subfamily. Mn(2+) serves as cofactor.

It is found in the golgi apparatus membrane. The catalysed reaction is L-seryl-[protein] + UDP-N-acetyl-alpha-D-galactosamine = a 3-O-[N-acetyl-alpha-D-galactosaminyl]-L-seryl-[protein] + UDP + H(+). It carries out the reaction L-threonyl-[protein] + UDP-N-acetyl-alpha-D-galactosamine = a 3-O-[N-acetyl-alpha-D-galactosaminyl]-L-threonyl-[protein] + UDP + H(+). It functions in the pathway protein modification; protein glycosylation. In terms of biological role, catalyzes the initial reaction in O-linked oligosaccharide biosynthesis, the transfer of an N-acetyl-D-galactosamine residue to a serine or threonine residue on the protein receptor. May participate in synthesis of oncofetal fibronectin. Has activity toward MUC1A, MUC2, EA2 and fibronectin peptides. This Bos taurus (Bovine) protein is Polypeptide N-acetylgalactosaminyltransferase 6 (GALNT6).